A 308-amino-acid chain; its full sequence is MKVKVRSYFTISVEDRTKRLHNTLSAEYIYLIQGLLTQGQSYKAPYSGYTVAFTPPSNMYFVFLSNGVVVARFPAKLLSYNENINTVNASQCQNNLTSCNLNNLLFSLEYSSTDETNDTYTFDEVQLWADNEYMIAYASVGTTTKNVNTFVRVTWDAIVTIESDNVLYIPGCTDFSLMLNLQLQLNNYQPYLCLNLPYIIVALTLVPYSLVPQNTFLYTQLSTLLKILNISSTQQLQLQGVQYYVVGNTVYPISQPYIIINTQQPNTITLFLLYGINNNYFIYTTSLSVTIQYFKLYIPTLTINMVEQ.

A helical membrane pass occupies residues 191 to 211; sequence YLCLNLPYIIVALTLVPYSLV.

The protein localises to the host membrane. This is an uncharacterized protein from Saccharolobus islandicus (Sulfolobus islandicus).